Consider the following 548-residue polypeptide: Adenine deaminase (548 aa).

The protein belongs to the metallo-dependent hydrolases superfamily. Adenine deaminase family. Mn(2+) serves as cofactor.

It catalyses the reaction adenine + H2O + H(+) = hypoxanthine + NH4(+). This chain is Adenine deaminase, found in Borreliella burgdorferi (strain ATCC 35210 / DSM 4680 / CIP 102532 / B31) (Borrelia burgdorferi).